A 92-amino-acid chain; its full sequence is N(2)-fixation sustaining protein CowN (92 aa).

Belongs to the CowN family.

In terms of biological role, is required to sustain N(2)-dependent growth in the presence of low levels of carbon monoxide (CO). Probably acts by protecting the N(2) fixation ability of the nitrogenase complex, which is inactivated in the presence of CO. In Rhodopseudomonas palustris (strain HaA2), this protein is N(2)-fixation sustaining protein CowN.